The following is a 488-amino-acid chain: Ribulose bisphosphate carboxylase large chain (488 aa).

Substrate-binding residues include Asn-127 and Thr-177. Catalysis depends on Lys-179, which acts as the Proton acceptor. Substrate is bound at residue Lys-181. Residues Lys-205, Asp-207, and Glu-208 each contribute to the Mg(2+) site. An N6-carboxylysine modification is found at Lys-205. Residue His-297 is the Proton acceptor of the active site. 3 residues coordinate substrate: Arg-298, His-330, and Ser-382.

It belongs to the RuBisCO large chain family. Type I subfamily. Heterohexadecamer of 8 large chains and 8 small chains. It depends on Mg(2+) as a cofactor.

It localises to the plastid. Its subcellular location is the chloroplast. It catalyses the reaction 2 (2R)-3-phosphoglycerate + 2 H(+) = D-ribulose 1,5-bisphosphate + CO2 + H2O. It carries out the reaction D-ribulose 1,5-bisphosphate + O2 = 2-phosphoglycolate + (2R)-3-phosphoglycerate + 2 H(+). Functionally, ruBisCO catalyzes two reactions: the carboxylation of D-ribulose 1,5-bisphosphate, the primary event in carbon dioxide fixation, as well as the oxidative fragmentation of the pentose substrate in the photorespiration process. Both reactions occur simultaneously and in competition at the same active site. The polypeptide is Ribulose bisphosphate carboxylase large chain (Cyanidioschyzon merolae (strain NIES-3377 / 10D) (Unicellular red alga)).